Here is a 36-residue protein sequence, read N- to C-terminus: EISCEPGTTFQDKCNTCRCGKDGKSAAGCTLKACPQ.

One can recognise a Pacifastin domain in the interval 1–36 (EISCEPGTTFQDKCNTCRCGKDGKSAAGCTLKACPQ). Disulfide bonds link cysteine 4–cysteine 19, cysteine 14–cysteine 34, and cysteine 17–cysteine 29.

It belongs to the protease inhibitor I19 family. Expressed in hemolymph.

It is found in the secreted. In terms of biological role, probable serine protease inhibitor. This chain is Serine protease inhibitor 2, found in Melanoplus sanguinipes (Migratory grasshopper).